A 347-amino-acid chain; its full sequence is Heat-inducible transcription repressor HrcA (347 aa).

The protein belongs to the HrcA family.

In terms of biological role, negative regulator of class I heat shock genes (grpE-dnaK-dnaJ and groELS operons). Prevents heat-shock induction of these operons. The polypeptide is Heat-inducible transcription repressor HrcA (Mycobacterium sp. (strain JLS)).